Reading from the N-terminus, the 164-residue chain is Crossover junction endodeoxyribonuclease RuvC (164 aa).

Residues D7, E67, and D139 contribute to the active site. D7, E67, and D139 together coordinate Mg(2+).

The protein belongs to the RuvC family. Homodimer which binds Holliday junction (HJ) DNA. The HJ becomes 2-fold symmetrical on binding to RuvC with unstacked arms; it has a different conformation from HJ DNA in complex with RuvA. In the full resolvosome a probable DNA-RuvA(4)-RuvB(12)-RuvC(2) complex forms which resolves the HJ. Requires Mg(2+) as cofactor.

The protein localises to the cytoplasm. It catalyses the reaction Endonucleolytic cleavage at a junction such as a reciprocal single-stranded crossover between two homologous DNA duplexes (Holliday junction).. The RuvA-RuvB-RuvC complex processes Holliday junction (HJ) DNA during genetic recombination and DNA repair. Endonuclease that resolves HJ intermediates. Cleaves cruciform DNA by making single-stranded nicks across the HJ at symmetrical positions within the homologous arms, yielding a 5'-phosphate and a 3'-hydroxyl group; requires a central core of homology in the junction. The consensus cleavage sequence is 5'-(A/T)TT(C/G)-3'. Cleavage occurs on the 3'-side of the TT dinucleotide at the point of strand exchange. HJ branch migration catalyzed by RuvA-RuvB allows RuvC to scan DNA until it finds its consensus sequence, where it cleaves and resolves the cruciform DNA. In Geobacter sulfurreducens (strain ATCC 51573 / DSM 12127 / PCA), this protein is Crossover junction endodeoxyribonuclease RuvC.